The sequence spans 79 residues: Large ribosomal subunit protein bL31 (79 aa).

This sequence belongs to the bacterial ribosomal protein bL31 family. Type A subfamily. Part of the 50S ribosomal subunit.

Functionally, binds the 23S rRNA. The sequence is that of Large ribosomal subunit protein bL31 (rpmE) from Rickettsia bellii (strain RML369-C).